Consider the following 478-residue polypeptide: Protein trichome birefringence-like 20 (478 aa).

A helical; Signal-anchor for type II membrane protein membrane pass occupies residues 10–30 (IGLVIFPLILLTIAPILYLFF). The span at 50–68 (SSAISSPSRYNHSSSSSDS) shows a compositional bias: low complexity. A disordered region spans residues 50–125 (SSAISSPSRY…KEHRRKKRKR (76 aa)). Over residues 92–110 (SSSLHNNDRLSISSSNGHH) the composition is skewed to polar residues. The segment covering 112–125 (VTPKKEHRRKKRKR) has biased composition (basic residues). Residues 200-202 (GDS) carry the GDS motif motif. Positions 447-461 (DCVHWCLPGPIDSWN) match the DCXHWCLPGXXDXWN motif motif.

This sequence belongs to the PC-esterase family. TBL subfamily.

The protein resides in the membrane. Functionally, may act as a bridging protein that binds pectin and other cell wall polysaccharides. Probably involved in maintaining esterification of pectins. May be involved in the specific O-acetylation of cell wall polymers. This chain is Protein trichome birefringence-like 20 (TBL20), found in Arabidopsis thaliana (Mouse-ear cress).